The sequence spans 514 residues: Peptide chain release factor 3 (514 aa).

Residues 8–268 (KKRRTFAIIS…TFLEFAPEPH (261 aa)) form the tr-type G domain. GTP is bound by residues 17–24 (SHPDAGKT), 85–89 (DTPGH), and 139–142 (NKLD).

Belongs to the TRAFAC class translation factor GTPase superfamily. Classic translation factor GTPase family. PrfC subfamily.

It localises to the cytoplasm. Increases the formation of ribosomal termination complexes and stimulates activities of RF-1 and RF-2. It binds guanine nucleotides and has strong preference for UGA stop codons. It may interact directly with the ribosome. The stimulation of RF-1 and RF-2 is significantly reduced by GTP and GDP, but not by GMP. This Streptococcus pyogenes serotype M18 (strain MGAS8232) protein is Peptide chain release factor 3.